The following is a 505-amino-acid chain: UDP-N-acetylmuramoyl-L-alanyl-D-glutamate--2,6-diaminopimelate ligase (505 aa).

Residue S42 participates in UDP-N-acetyl-alpha-D-muramoyl-L-alanyl-D-glutamate binding. 126-132 (GTNGKTT) is an ATP binding site. Residues 168–169 (TT), S195, Q201, and R203 each bind UDP-N-acetyl-alpha-D-muramoyl-L-alanyl-D-glutamate. K235 carries the N6-carboxylysine modification. Residues R399, 423 to 426 (DNPR), G474, and E478 contribute to the meso-2,6-diaminopimelate site. The Meso-diaminopimelate recognition motif signature appears at 423–426 (DNPR).

Belongs to the MurCDEF family. MurE subfamily. Mg(2+) is required as a cofactor. Post-translationally, carboxylation is probably crucial for Mg(2+) binding and, consequently, for the gamma-phosphate positioning of ATP.

It is found in the cytoplasm. It catalyses the reaction UDP-N-acetyl-alpha-D-muramoyl-L-alanyl-D-glutamate + meso-2,6-diaminopimelate + ATP = UDP-N-acetyl-alpha-D-muramoyl-L-alanyl-gamma-D-glutamyl-meso-2,6-diaminopimelate + ADP + phosphate + H(+). It participates in cell wall biogenesis; peptidoglycan biosynthesis. Catalyzes the addition of meso-diaminopimelic acid to the nucleotide precursor UDP-N-acetylmuramoyl-L-alanyl-D-glutamate (UMAG) in the biosynthesis of bacterial cell-wall peptidoglycan. This Synechocystis sp. (strain ATCC 27184 / PCC 6803 / Kazusa) protein is UDP-N-acetylmuramoyl-L-alanyl-D-glutamate--2,6-diaminopimelate ligase.